Here is a 121-residue protein sequence, read N- to C-terminus: Conopressin-conophysin (121 aa).

The first 20 residues, 1-20 (MGRLTMALCWLLLLLLTTQA), serve as a signal peptide directing secretion. A disulfide bond links cysteine 21 and cysteine 26. The residue at position 27 (proline 27) is a 4-hydroxyproline; partial; in Conopressin-ba1c. Glycine 29 carries the post-translational modification Glycine amide. 7 cysteine pairs are disulfide-bonded: cysteine 43/cysteine 83, cysteine 46/cysteine 57, cysteine 51/cysteine 73, cysteine 58/cysteine 63, cysteine 90/cysteine 108, cysteine 102/cysteine 120, and cysteine 109/cysteine 114.

The protein belongs to the vasopressin/oxytocin family. Expressed by the venom duct.

It localises to the secreted. In Conus bayani (Bayan's cone), this protein is Conopressin-conophysin.